Consider the following 962-residue polypeptide: Glycine dehydrogenase (decarboxylating) (962 aa).

N6-(pyridoxal phosphate)lysine is present on Lys709.

This sequence belongs to the GcvP family. The glycine cleavage system is composed of four proteins: P, T, L and H. Pyridoxal 5'-phosphate is required as a cofactor.

The enzyme catalyses N(6)-[(R)-lipoyl]-L-lysyl-[glycine-cleavage complex H protein] + glycine + H(+) = N(6)-[(R)-S(8)-aminomethyldihydrolipoyl]-L-lysyl-[glycine-cleavage complex H protein] + CO2. The glycine cleavage system catalyzes the degradation of glycine. The P protein binds the alpha-amino group of glycine through its pyridoxal phosphate cofactor; CO(2) is released and the remaining methylamine moiety is then transferred to the lipoamide cofactor of the H protein. This is Glycine dehydrogenase (decarboxylating) from Shewanella amazonensis (strain ATCC BAA-1098 / SB2B).